We begin with the raw amino-acid sequence, 401 residues long: Putative F-box/FBD/LRR-repeat protein At3g23955 (401 aa).

The F-box domain maps to 56–102 (VPARFQLPDPLLTQILNHLPTEEAVKTSVLSTRWRTLWLWVHNLELS). LRR repeat units lie at residues 128–152 (IESL…AFVK) and 275–296 (MSSL…FLRS). Residues 321–373 (IKRVSISSVPECLLSSLEFVEFKAPICGLAPEMMLVWYFLENSPTLKKLTLRL) enclose the FBD domain.

The sequence is that of Putative F-box/FBD/LRR-repeat protein At3g23955 from Arabidopsis thaliana (Mouse-ear cress).